Consider the following 510-residue polypeptide: 2,3-bisphosphoglycerate-independent phosphoglycerate mutase (510 aa).

2 residues coordinate Mn(2+): aspartate 12 and serine 62. Serine 62 (phosphoserine intermediate) is an active-site residue. Substrate contacts are provided by residues histidine 123, 153–154, arginine 185, arginine 191, 261–264, and lysine 336; these read RD and RPDR. Residues aspartate 403, histidine 407, aspartate 444, histidine 445, and histidine 462 each coordinate Mn(2+).

Belongs to the BPG-independent phosphoglycerate mutase family. In terms of assembly, monomer. The cofactor is Mn(2+).

It carries out the reaction (2R)-2-phosphoglycerate = (2R)-3-phosphoglycerate. It functions in the pathway carbohydrate degradation; glycolysis; pyruvate from D-glyceraldehyde 3-phosphate: step 3/5. In terms of biological role, essential for rapid growth and for sporulation. Catalyzes the interconversion of 2-phosphoglycerate and 3-phosphoglycerate. The sequence is that of 2,3-bisphosphoglycerate-independent phosphoglycerate mutase from Priestia megaterium (strain DSM 319 / IMG 1521) (Bacillus megaterium).